Here is a 349-residue protein sequence, read N- to C-terminus: Probable myosin light chain kinase DDB_G0275057 (349 aa).

A disordered region spans residues 1–33; the sequence is MGCFNSKEAGAGRPKTTTQQQQQATPEPTVTTA. A compositionally biased stretch (low complexity) spans 16 to 33; the sequence is TTTQQQQQATPEPTVTTA. A Protein kinase domain is found at 56-313; that stretch reads YVVGKELGRG…AKQCLDDLWL (258 aa). ATP is bound by residues 62 to 70 and Lys85; that span reads LGRGAFSVV. The Proton acceptor role is filled by Asp178.

It belongs to the protein kinase superfamily. CAMK Ser/Thr protein kinase family. CaMK subfamily.

It catalyses the reaction L-seryl-[myosin light chain] + ATP = O-phospho-L-seryl-[myosin light chain] + ADP + H(+). It carries out the reaction L-threonyl-[myosin light chain] + ATP = O-phospho-L-threonyl-[myosin light chain] + ADP + H(+). Its activity is regulated as follows. Does not have a calmodulin-binding domain. May phosphorylate a specific serine in the N-terminus of a myosin light chain. The polypeptide is Probable myosin light chain kinase DDB_G0275057 (Dictyostelium discoideum (Social amoeba)).